We begin with the raw amino-acid sequence, 2046 residues long: Protein TIC 214 (2046 aa).

Helical transmembrane passes span 18 to 38 (VSGPIILFGLYYGFIATLPFG), 54 to 74 (LYGIIAISGSITGQLIVFLSM), 79 to 99 (IYAALWKPHAITLLVIPYTFC), 125 to 145 (ILSLFMGGLILQLLNPILLAN), 163 to 183 (ISFMISSFCGWLGGHILFINL), and 214 to 234 (TFSVLLISYFSFYLGRSPLIF). Disordered stretches follow at residues 278–299 (DEDRSVAMAKKGRSVAEDEDRS), 320–472 (ARSV…VPRE), and 1833–1898 (AKDS…EDEI). Basic and acidic residues-rich tracts occupy residues 322 to 335 (SVAEDKDPEDEHRS), 344 to 368 (SVAEDKDPEDEHRSVAMAKKDRSVA), and 378 to 457 (AKKD…RSVA). Residues 1833–1866 (AKDSNANDINAKDSNANDINANDSNAKDSNANDI) show a composition bias toward low complexity. The segment covering 1882–1898 (NAKDSNADVPKKKEDEI) has biased composition (basic and acidic residues).

Belongs to the TIC214 family. As to quaternary structure, part of the Tic complex.

It localises to the plastid. The protein resides in the chloroplast inner membrane. Its function is as follows. Involved in protein precursor import into chloroplasts. May be part of an intermediate translocation complex acting as a protein-conducting channel at the inner envelope. The sequence is that of Protein TIC 214 from Pinus koraiensis (Korean pine).